The sequence spans 223 residues: Endonuclease III (223 aa).

The region spanning 118–137 is the HhH domain; the sequence is RDFLTAIEGIGDKTADVVLL. [4Fe-4S] cluster is bound by residues Cys198, Cys205, Cys208, and Cys214.

This sequence belongs to the Nth/MutY family. Requires [4Fe-4S] cluster as cofactor.

It carries out the reaction 2'-deoxyribonucleotide-(2'-deoxyribose 5'-phosphate)-2'-deoxyribonucleotide-DNA = a 3'-end 2'-deoxyribonucleotide-(2,3-dehydro-2,3-deoxyribose 5'-phosphate)-DNA + a 5'-end 5'-phospho-2'-deoxyribonucleoside-DNA + H(+). In terms of biological role, probably part of a 4-gene DNA damage response locus in which the upstream ups system, in combination with this downstream locus, functions in homologous recombination to rescue Sulfolobales from DNA-damaging threats. DNA repair enzyme that has both DNA N-glycosylase activity and AP-lyase activity. The DNA N-glycosylase activity releases various damaged pyrimidines from DNA by cleaving the N-glycosidic bond, leaving an AP (apurinic/apyrimidinic) site. The AP-lyase activity cleaves the phosphodiester bond 3' to the AP site by a beta-elimination, leaving a 3'-terminal unsaturated sugar and a product with a terminal 5'-phosphate. Nicks UV-treated plasmid DNA in a dose-dependent manner, has no activity on untreated DNA. In Sulfolobus acidocaldarius (strain ATCC 33909 / DSM 639 / JCM 8929 / NBRC 15157 / NCIMB 11770), this protein is Endonuclease III.